A 162-amino-acid polypeptide reads, in one-letter code: Caveolin-2 (162 aa).

Topologically, residues 1–86 (MGLETEKADV…FEISKYVLYK (86 aa)) are cytoplasmic. Tyr19 bears the Phosphotyrosine; by SRC mark. Phosphoserine is present on residues Ser20 and Ser23. The residue at position 27 (Tyr27) is a Phosphotyrosine; by SRC. A Phosphoserine modification is found at Ser36. An intramembrane region (helical) is located at residues 87-107 (FLTVFLAIPLAFVAGILFATL). Residues 108–162 (SCLHIWIIMPFVKTCLMVLPSVQTIWKSVTDVIIAPLCTSVGRSFSSISLRLSQD) are Cytoplasmic-facing.

This sequence belongs to the caveolin family. Monomer or homodimer. Interacts with CAV1; the interaction forms a stable heterooligomeric complex that is required for targeting to lipid rafts and for caveolae formation. Tyrosine phosphorylated forms do not form heterooligomers with the Tyr-19-phosphorylated form existing as a monomer or dimer, and the Tyr-27-form as a monomer only. Interacts (tyrosine phosphorylated form) with the SH2 domain-containing proteins, RASA1, NCK1 and SRC. Interacts (tyrosine phosphorylated form) with INSR, the interaction (Tyr-27-phosphorylated form) is increased on insulin stimulation. Interacts (Tyr-19 phosphorylated form) with MAPK1 (phosphorylated form); the interaction, promoted by insulin, leads to nuclear location and MAPK1 activation. Interacts with STAT3; the interaction is increased on insulin-induced tyrosine phosphorylation leading to STAT activation. Phosphorylated on serine and tyrosine residues. CAV1 promotes phosphorylation on Ser-23 which then targets the complex to the plasma membrane, lipid rafts and caveolae. Phosphorylation on Ser-36 appears to modulate mitosis in endothelial cells. Phosphorylation on both Tyr-19 and Tyr-27 is required for insulin-induced 'Ser-727' phosphorylation of STAT3 and its activation. Phosphorylation on Tyr-19 is required for insulin-induced phosphorylation of MAPK1 and DNA binding of STAT3. Tyrosine phosphorylation is induced by both EGF and insulin (By. similarity).

Its subcellular location is the nucleus. It localises to the cytoplasm. The protein localises to the golgi apparatus membrane. The protein resides in the cell membrane. It is found in the membrane. Its subcellular location is the caveola. May act as a scaffolding protein within caveolar membranes. Interacts directly with G-protein alpha subunits and can functionally regulate their activity. Acts as an accessory protein in conjunction with CAV1 in targeting to lipid rafts and driving caveolae formation. The Ser-36 phosphorylated form has a role in modulating mitosis in endothelial cells. Positive regulator of cellular mitogenesis of the MAPK signaling pathway. Required for the insulin-stimulated nuclear translocation and activation of MAPK1 and STAT3, and the subsequent regulation of cell cycle progression. The polypeptide is Caveolin-2 (CAV2) (Otolemur garnettii (Small-eared galago)).